A 79-amino-acid chain; its full sequence is Alpha-elapitoxin-Aa2e (79 aa).

5 disulfide bridges follow: Cys-3/Cys-20, Cys-13/Cys-41, Cys-26/Cys-30, Cys-45/Cys-56, and Cys-57/Cys-62.

The protein belongs to the three-finger toxin family. Long-chain subfamily. Type II alpha-neurotoxin sub-subfamily. Expressed by the venom gland.

Its subcellular location is the secreted. Functionally, binds with high affinity to muscular (alpha-1/CHRNA1) and neuronal (alpha-7/CHRNA7) nicotinic acetylcholine receptor (nAChR) and inhibits acetylcholine from binding to the receptor, thereby impairing neuromuscular and neuronal transmission. Produces paralysis, clear dyspnea and lethality on mice. This chain is Alpha-elapitoxin-Aa2e, found in Acanthophis antarcticus (Common death adder).